The sequence spans 166 residues: Small ribosomal subunit protein uS5 (166 aa).

The 64-residue stretch at 11-74 (LIEKLVSVKR…ENAKKNMVSV (64 aa)) folds into the S5 DRBM domain.

It belongs to the universal ribosomal protein uS5 family. In terms of assembly, part of the 30S ribosomal subunit. Contacts proteins S4 and S8.

Functionally, with S4 and S12 plays an important role in translational accuracy. In terms of biological role, located at the back of the 30S subunit body where it stabilizes the conformation of the head with respect to the body. The protein is Small ribosomal subunit protein uS5 of Francisella tularensis subsp. tularensis (strain FSC 198).